Reading from the N-terminus, the 675-residue chain is Zinc finger CCCH domain-containing protein 65 (675 aa).

Positions 294 to 320 are disordered; that stretch reads TFSNEAKMDPGTSIKKRSAPSKDAKAR. Positions 307-320 are enriched in basic residues; it reads IKKRSAPSKDAKAR. The stretch at 314 to 342 forms a coiled coil; sequence SKDAKARKRAKARIKRAQERIALGVKKLK. 3 consecutive C3H1-type zinc fingers follow at residues 350 to 377, 384 to 406, and 409 to 432; these read PKPI…HDTI, PCCY…HDLS, and PCNN…HKGT. 2 disordered regions span residues 487-572 and 586-612; these read LKPS…LPLG and EQKT…SHIQ. Residues 490-504 are compositionally biased toward low complexity; sequence SSHSNQRNSSDASSS. A compositionally biased stretch (polar residues) spans 543–567; it reads KASSASKPNTDNSDSQTLKQSQQGS. The segment covering 586 to 595 has biased composition (basic and acidic residues); sequence EQKTLNREPQ. The segment covering 597-612 has biased composition (polar residues); sequence PASSKNLKTTPSSHIQ.

Functionally, possesses RNA-binding and ribonuclease activities in vitro. This Arabidopsis thaliana (Mouse-ear cress) protein is Zinc finger CCCH domain-containing protein 65 (EMB1789).